Consider the following 70-residue polypeptide: Beta-defensin 43 (70 aa).

Positions 1–22 (MRLLLSILGVLTLLSILPLARS) are cleaved as a signal peptide. 2 cysteine pairs are disulfide-bonded: Cys-29–Cys-57 and Cys-36–Cys-50.

Belongs to the beta-defensin family.

The protein resides in the secreted. Functionally, has bactericidal activity. The chain is Beta-defensin 43 (Defb43) from Rattus norvegicus (Rat).